The chain runs to 525 residues: Histidine-rich glycoprotein (525 aa).

The first 18 residues, 1-18 (MKVLTTALLLVTLQCSHA), serve as a signal peptide directing secretion. The Cystatin 1 domain maps to 19-122 (LSPTNCDASE…ESQDLSVNGY (104 aa)). Cystine bridges form between Cys24/Cys504, Cys78/Cys89, Cys103/Cys124, Cys201/Cys414, and Cys216/Cys239. An interaction with ATP5F1A region spans residues 41–84 (GRRSGYVFELLRVSDAHLDRAGTATVYYLALDVIESDCWVLSTK). N-linked (GlcNAc...) asparagine glycosylation is found at Asn112, Asn123, and Asn200. In terms of domain architecture, Cystatin 2 spans 135-240 (NTKDSPVLLD…TPDSIDINCE (106 aa)). The segment at 273 to 447 (GSRDHHHTHK…SRKRGPGKGL (175 aa)) is disordered. The segment covering 293-303 (EGKDNSDRPRL) has biased composition (basic and acidic residues). N-linked (GlcNAc...) asparagine glycans are attached at residues Asn322 and Asn330. Over residues 339–404 (HGHRPHGHHP…GHHPHGHHPH (66 aa)) the composition is skewed to basic residues. A necessary for endothelial cell focal adhesions and anti-angiogenic activities region spans residues 345 to 379 (GHHPHSHHPPGHHSHGHHPHGHHPHSHHSHGHHPP). Phosphoserine is present on Ser438.

In terms of assembly, interacts with THBS1 (via the TSP type I repeats); the interaction blocks the antiangiogenic effect of THBS1 with CD36. Interacts with HPSE; the interaction is enhanced at acidic pH, partially inhibits binding of HPSE to cell surface receptors and modulates its enzymatic activity. Interacts (via the HRR domain) with TMP1; the interaction partially mediates the antiangiogenic properties of HRG. Interacts with kappa and lambda light chains of IgG molecules. Interacts with ATP5F1A; the interaction occurs on the surface of T-cells and alters their cell morphology in concert with CONA. Binds IgG molecules containing kappa and lambda light chains and inhibits the formation of insoluble immunoglobulin complexes. Interacts with F12; the interaction, which is enhanced in the presence of zinc ions and inhibited by heparin-binding to HRG, inhibits factor XII autoactivation and contact-initiated coagulation. Interacts with PLG (via its Kringle domains); the interaction tethers PLG to the cell surface and enhances its activation. Interacts (via the HRR domain) with TPM1; the interaction appears to contribute to the antiangiogenic properties of the HRR domain. Interacts with THBS2; the interaction blocks the antiangiogenic effect of THBS2 with CD36. It depends on Zn(2+) as a cofactor. Proteolytic cleavage produces several HRG fragments which are mostly disulfide-linked and, therefore, not released. Cleavage by plasmin is inhibited in the presence of heparin, zinc ions or in an acidic environment. Cleavage reduces binding of HRG to heparan sulfate, but enhances the ability of HRG to bind and tether plasminogen to the cell surface. On platelet activation, releases a 33 kDa antiangiogenic peptide which encompasses the HRR. Also cleaved in the C-terminal by plasmin. In terms of processing, N-glycosylated. As to expression, expressed in liver, blood plasma, serum and in platelets. Also present in fibrin clots, wound fluid from acute wounds and chronic leg ulcers.

Its subcellular location is the secreted. Plasma glycoprotein that binds a number of ligands such as heme, heparin, heparan sulfate, thrombospondin, plasminogen, and divalent metal ions. Binds heparin and heparin/glycosaminoglycans in a zinc-dependent manner. Binds heparan sulfate on the surface of liver, lung, kidney and heart endothelial cells. Binds to N-sulfated polysaccharide chains on the surface of liver endothelial cells. Inhibits rosette formation. Acts as an adapter protein and is implicated in regulating many processes such as immune complex and pathogen clearance, cell chemotaxis, cell adhesion, angiogenesis, coagulation and fibrinolysis. Mediates clearance of necrotic cells through enhancing the phagocytosis of necrotic cells in a heparan sulfate-dependent pathway. This process can be regulated by the presence of certain HRG ligands such as heparin and zinc ions. Binds to IgG subclasses of immunoglobins containing kappa and lambda light chains with different affinities regulating their clearance and inhibiting the formation of insoluble immune complexes. Tethers plasminogen to the cell surface. Binds T-cells and alters the cell morphology. Acts as a regulator of the vascular endothelial growth factor (VEGF) signaling pathway; inhibits endothelial cell motility by reducing VEGF-induced complex formation between PXN/paxillin and ILK/integrin-linked protein kinase and by promoting inhibition of VEGF-induced tyrosine phosphorylation of focal adhesion kinases and alpha-actinins in endothelial cells. Also plays a role in the regulation of tumor angiogenesis and tumor immune surveillance. Normalizes tumor vessels and promotes antitumor immunity by polarizing tumor-associated macrophages, leading to decreased tumor growth and metastasis. Modulates angiogenesis by blocking the CD6-mediated antiangiongenic effect of thrombospondins, THBS1 and THBS2. This chain is Histidine-rich glycoprotein (Hrg), found in Mus musculus (Mouse).